Here is a 105-residue protein sequence, read N- to C-terminus: Heat shock protein HspQ (105 aa).

The protein belongs to the HspQ family.

The protein localises to the cytoplasm. In terms of biological role, involved in the degradation of certain denaturated proteins, including DnaA, during heat shock stress. This Baumannia cicadellinicola subsp. Homalodisca coagulata protein is Heat shock protein HspQ.